Reading from the N-terminus, the 131-residue chain is UPF0146 protein PH0209 (131 aa).

It belongs to the UPF0146 family.

The chain is UPF0146 protein PH0209 from Pyrococcus horikoshii (strain ATCC 700860 / DSM 12428 / JCM 9974 / NBRC 100139 / OT-3).